We begin with the raw amino-acid sequence, 1025 residues long: Glycine dehydrogenase (decarboxylating), mitochondrial (1025 aa).

The transit peptide at 1-35 (MQLCARAWGLRLGRGAGGGHRLARGTGLSWAQRSR) directs the protein to the mitochondrion. The disordered stretch occupies residues 16 to 51 (AGGGHRLARGTGLSWAQRSRDSSGGGGGGGGGDRGA). A compositionally biased stretch (gly residues) spans 38–50 (SGGGGGGGGGDRG). An N6-acetyllysine mark is found at K452, K519, K653, and K669. K759 is subject to N6-(pyridoxal phosphate)lysine.

Belongs to the GcvP family. Interacts with GCSH. Homodimer. The glycine cleavage system is composed of four proteins: P (GLDC), T (GCST), L (DLD) and H (GCSH). Pyridoxal 5'-phosphate is required as a cofactor.

The protein resides in the mitochondrion. It carries out the reaction N(6)-[(R)-lipoyl]-L-lysyl-[glycine-cleavage complex H protein] + glycine + H(+) = N(6)-[(R)-S(8)-aminomethyldihydrolipoyl]-L-lysyl-[glycine-cleavage complex H protein] + CO2. With respect to regulation, stimulated by lipoic acid. Inhibited in presence of methylamine. Its function is as follows. The glycine cleavage system catalyzes the degradation of glycine. The P protein (GLDC) binds the alpha-amino group of glycine through its pyridoxal phosphate cofactor; CO(2) is released and the remaining methylamine moiety is then transferred to the lipoamide cofactor of the H protein (GCSH). The polypeptide is Glycine dehydrogenase (decarboxylating), mitochondrial (Mus musculus (Mouse)).